A 403-amino-acid chain; its full sequence is 4,4'-dithiodibutanoate disulfide reductase (403 aa).

Q103 serves as a coordination point for FMN. Residue Y173 is the Proton donor of the active site. 348-349 (AR) is a binding site for FMN.

The protein belongs to the NADH:flavin oxidoreductase/NADH oxidase family. Requires FMN as cofactor.

It carries out the reaction 2 4-sulfanylbutanoate + NAD(+) = 4,4'-disulfanyldibutanoate + NADH + H(+). Inactivated by cobalt, nickel and zinc ions. Its function is as follows. Involved in the degradation of the organic disulfide 4,4'-dithiodibutyric acid (DTDB). Catalyzes the initial cleavage of DTDB into 2 molecules of 4-mercaptobutyric acid (4MB). Low activities are observed with other disulfide compounds, such as 3,3'-dithiodipropionic acid DTDP, 3,3'-thiodipropionic acid TDP and DTNB. The protein is 4,4'-dithiodibutanoate disulfide reductase of Rhodococcus erythropolis (Arthrobacter picolinophilus).